A 130-amino-acid chain; its full sequence is NADH-quinone oxidoreductase subunit A (130 aa).

The next 3 membrane-spanning stretches (helical) occupy residues 17 to 37 (YIFVGLFFVVACFISCVMLAL), 74 to 94 (LVGILFIIFDLEIIFLFPWAV), and 99 to 119 (LGPAAFVSVLIFLIILTVGFV).

It belongs to the complex I subunit 3 family. NDH-1 is composed of 14 different subunits. Subunits NuoA, H, J, K, L, M, N constitute the membrane sector of the complex.

It localises to the cell inner membrane. The catalysed reaction is a quinone + NADH + 5 H(+)(in) = a quinol + NAD(+) + 4 H(+)(out). Its function is as follows. NDH-1 shuttles electrons from NADH, via FMN and iron-sulfur (Fe-S) centers, to quinones in the respiratory chain. The immediate electron acceptor for the enzyme in this species is believed to be ubiquinone. Couples the redox reaction to proton translocation (for every two electrons transferred, four hydrogen ions are translocated across the cytoplasmic membrane), and thus conserves the redox energy in a proton gradient. This is NADH-quinone oxidoreductase subunit A from Neorickettsia sennetsu (strain ATCC VR-367 / Miyayama) (Ehrlichia sennetsu).